The following is a 208-amino-acid chain: A-type ATP synthase subunit E (208 aa).

Belongs to the V-ATPase E subunit family. As to quaternary structure, has multiple subunits with at least A(3), B(3), C, D, E, F, H, I and proteolipid K(x).

It localises to the cell membrane. Its function is as follows. Component of the A-type ATP synthase that produces ATP from ADP in the presence of a proton gradient across the membrane. The sequence is that of A-type ATP synthase subunit E from Ignicoccus hospitalis (strain KIN4/I / DSM 18386 / JCM 14125).